A 253-amino-acid chain; its full sequence is 4-hydroxy-tetrahydrodipicolinate reductase (253 aa).

NAD(+)-binding positions include 8–13 (GAKGRM), D34, 76–78 (GTT), and 108–111 (APNF). The active-site Proton donor/acceptor is H138. H139 lines the (S)-2,3,4,5-tetrahydrodipicolinate pocket. The active-site Proton donor is the K142. Residue 148–149 (GT) participates in (S)-2,3,4,5-tetrahydrodipicolinate binding.

This sequence belongs to the DapB family.

Its subcellular location is the cytoplasm. It catalyses the reaction (S)-2,3,4,5-tetrahydrodipicolinate + NAD(+) + H2O = (2S,4S)-4-hydroxy-2,3,4,5-tetrahydrodipicolinate + NADH + H(+). It carries out the reaction (S)-2,3,4,5-tetrahydrodipicolinate + NADP(+) + H2O = (2S,4S)-4-hydroxy-2,3,4,5-tetrahydrodipicolinate + NADPH + H(+). It participates in amino-acid biosynthesis; L-lysine biosynthesis via DAP pathway; (S)-tetrahydrodipicolinate from L-aspartate: step 4/4. Catalyzes the conversion of 4-hydroxy-tetrahydrodipicolinate (HTPA) to tetrahydrodipicolinate. This is 4-hydroxy-tetrahydrodipicolinate reductase from Bifidobacterium animalis subsp. lactis (strain AD011).